A 467-amino-acid polypeptide reads, in one-letter code: Fumarate hydratase class II (467 aa).

Residues 98-100 (SGT), arginine 126, 129-132 (HPND), 139-141 (SSN), and threonine 187 each bind substrate. Catalysis depends on histidine 188, which acts as the Proton donor/acceptor. Serine 318 is a catalytic residue. Substrate is bound by residues serine 319 and 324-326 (KVN).

This sequence belongs to the class-II fumarase/aspartase family. Fumarase subfamily. Homotetramer.

The protein localises to the cytoplasm. The enzyme catalyses (S)-malate = fumarate + H2O. Its pathway is carbohydrate metabolism; tricarboxylic acid cycle; (S)-malate from fumarate: step 1/1. Functionally, involved in the TCA cycle. Catalyzes the stereospecific interconversion of fumarate to L-malate. The protein is Fumarate hydratase class II of Salmonella typhimurium (strain LT2 / SGSC1412 / ATCC 700720).